The chain runs to 228 residues: MKPTRPFHQTPVITIDGPSASGKGTVAALVAASLGFHLLDSGALYRLAALASLRYGISGDDVDALVKLIDDLHITFREGLAQLDGVDVSAEIRAEEVGGRASAIAVHAPVRAALVARQRAFRKEPGLVADGRDMGTVIFQDAVLKVFMTASVEARAARRHKQLIQKGFSANIDDLLRDLRERDERDSQRVAAPLKPAADAKLLDTSALSVDQAVEQVVQWYEALVPHA.

ATP is bound at residue 17 to 25 (GPSASGKGT).

This sequence belongs to the cytidylate kinase family. Type 1 subfamily.

The protein resides in the cytoplasm. It catalyses the reaction CMP + ATP = CDP + ADP. The catalysed reaction is dCMP + ATP = dCDP + ADP. The protein is Cytidylate kinase of Paraburkholderia phytofirmans (strain DSM 17436 / LMG 22146 / PsJN) (Burkholderia phytofirmans).